The following is a 325-amino-acid chain: MAAAAASLRRTVLGPRGVGLPGASAPGLLGGARSRQLPLRTPQAVSLSSKSGPSRGRKVMLSALGMLAAGGAGLAVALHSAVSASDLELHPPSYPWSHRGLLSSLDHTSIRRGFQVYKQVCSSCHSMDYVAYRHLVGVCYTEEEAKALAEEVEVQDGPNDDGEMFMRPGKLSDYFPKPYPNPEAARAANNGALPPDLSYIVRARHGGEDYVFSLLTGYCEPPTGVSLREGLYFNPYFPGQAIGMAPPIYTEVLEYDDGTPATMSQVAKDVATFLRWASEPEHDHRKRMGLKMLLMMGLLLPLTYAMKRHKWSVLKSRKLAYRPPK.

A mitochondrion-targeting transit peptide spans 1-84; the sequence is MAAAAASLRR…AVALHSAVSA (84 aa). Topologically, residues 85–287 are mitochondrial intermembrane; sequence SDLELHPPSY…SEPEHDHRKR (203 aa). Residues 108 to 209 enclose the Cytochrome c domain; that stretch reads TSIRRGFQVY…IVRARHGGED (102 aa). Positions 121, 124, 125, and 244 each coordinate heme c. A helical membrane pass occupies residues 288–308; it reads MGLKMLLMMGLLLPLTYAMKR. Residues 309–325 are Mitochondrial matrix-facing; sequence HKWSVLKSRKLAYRPPK.

This sequence belongs to the cytochrome c family. As to quaternary structure, component of the ubiquinol-cytochrome c oxidoreductase (cytochrome b-c1 complex, complex III, CIII), a multisubunit enzyme composed of 11 subunits. The complex is composed of 3 respiratory subunits cytochrome b, cytochrome c1 and Rieske protein UQCRFS1, 2 core protein subunits UQCRC1/QCR1 and UQCRC2/QCR2, and 6 low-molecular weight protein subunits UQCRH/QCR6, UQCRB/QCR7, UQCRQ/QCR8, UQCR10/QCR9, UQCR11/QCR10 and subunit 9, the cleavage product of Rieske protein UQCRFS1. The complex exists as an obligatory dimer and forms supercomplexes (SCs) in the inner mitochondrial membrane with NADH-ubiquinone oxidoreductase (complex I, CI) and cytochrome c oxidase (complex IV, CIV), resulting in different assemblies (supercomplex SCI(1)III(2)IV(1) and megacomplex MCI(2)III(2)IV(2)). Interacts with FLVCR2; this interaction occurs in the absence of heme and is disrupted upon heme binding. Heme c is required as a cofactor.

It is found in the mitochondrion inner membrane. It carries out the reaction a quinol + 2 Fe(III)-[cytochrome c](out) = a quinone + 2 Fe(II)-[cytochrome c](out) + 2 H(+)(out). In terms of biological role, component of the ubiquinol-cytochrome c oxidoreductase, a multisubunit transmembrane complex that is part of the mitochondrial electron transport chain which drives oxidative phosphorylation. The respiratory chain contains 3 multisubunit complexes succinate dehydrogenase (complex II, CII), ubiquinol-cytochrome c oxidoreductase (cytochrome b-c1 complex, complex III, CIII) and cytochrome c oxidase (complex IV, CIV), that cooperate to transfer electrons derived from NADH and succinate to molecular oxygen, creating an electrochemical gradient over the inner membrane that drives transmembrane transport and the ATP synthase. The cytochrome b-c1 complex catalyzes electron transfer from ubiquinol to cytochrome c, linking this redox reaction to translocation of protons across the mitochondrial inner membrane, with protons being carried across the membrane as hydrogens on the quinol. In the process called Q cycle, 2 protons are consumed from the matrix, 4 protons are released into the intermembrane space and 2 electrons are passed to cytochrome c. Cytochrome c1 is a catalytic core subunit containing a c-type heme. It transfers electrons from the [2Fe-2S] iron-sulfur cluster of the Rieske protein to cytochrome c. This is Cytochrome c1, heme protein, mitochondrial (Cyc1) from Mus musculus (Mouse).